The primary structure comprises 465 residues: Ribulose bisphosphate carboxylase large chain (465 aa).

Position 4 is an N6,N6,N6-trimethyllysine (K4). The substrate site is built by N113 and T163. The Proton acceptor role is filled by K165. K167 serves as a coordination point for substrate. K191, D193, and E194 together coordinate Mg(2+). An N6-carboxylysine modification is found at K191. The Proton acceptor role is filled by H284. Residues R285, H317, and S369 each contribute to the substrate site.

This sequence belongs to the RuBisCO large chain family. Type I subfamily. As to quaternary structure, heterohexadecamer of 8 large chains and 8 small chains; disulfide-linked. The disulfide link is formed within the large subunit homodimers. Requires Mg(2+) as cofactor. In terms of processing, the disulfide bond which can form in the large chain dimeric partners within the hexadecamer appears to be associated with oxidative stress and protein turnover.

The protein localises to the plastid. It localises to the chloroplast. The enzyme catalyses 2 (2R)-3-phosphoglycerate + 2 H(+) = D-ribulose 1,5-bisphosphate + CO2 + H2O. It carries out the reaction D-ribulose 1,5-bisphosphate + O2 = 2-phosphoglycolate + (2R)-3-phosphoglycerate + 2 H(+). Its function is as follows. RuBisCO catalyzes two reactions: the carboxylation of D-ribulose 1,5-bisphosphate, the primary event in carbon dioxide fixation, as well as the oxidative fragmentation of the pentose substrate in the photorespiration process. Both reactions occur simultaneously and in competition at the same active site. This is Ribulose bisphosphate carboxylase large chain from Securidaca diversifolia (Easter flower).